A 406-amino-acid polypeptide reads, in one-letter code: HEAT repeat-containing taxis protein OE_2401F (406 aa).

7 HEAT repeats span residues 7-41, 42-78, 90-127, 153-184, 185-215, 216-252, and 370-406; these read LERSGDVEKLVELLQESEKETVRRRAAEILGNLDE, PEPEGIQALVDAMSDDDESVRAAAIDALTQQEAVDAL, GATWAQAEAFVENLESETPELRMAAANVLGLLGVEDTA, IEQPAVTGILVDCLHGEPLKVRREAAESLGRL, TTEQALDGLLSVVEDDSEAMRRTAVSSLGRF, ETAEPVDALVERLGDESDLVRRAAVFSLIEILSNVPP, and VGGDRSRQRLERLVDETDSEEVRRRAFSAISKLGGKT.

Interacts with chemotaxis (Che) proteins.

Its function is as follows. Involved in taxis signal transduction. Essential for the ability to control the direction of flagellar rotation. May have a role between CheY and the flagellum. This is HEAT repeat-containing taxis protein OE_2401F from Halobacterium salinarum (strain ATCC 29341 / DSM 671 / R1).